Here is a 954-residue protein sequence, read N- to C-terminus: Glycine dehydrogenase (decarboxylating) (954 aa).

The residue at position 704 (lysine 704) is an N6-(pyridoxal phosphate)lysine.

It belongs to the GcvP family. As to quaternary structure, the glycine cleavage system is composed of four proteins: P, T, L and H. Requires pyridoxal 5'-phosphate as cofactor.

The catalysed reaction is N(6)-[(R)-lipoyl]-L-lysyl-[glycine-cleavage complex H protein] + glycine + H(+) = N(6)-[(R)-S(8)-aminomethyldihydrolipoyl]-L-lysyl-[glycine-cleavage complex H protein] + CO2. In terms of biological role, the glycine cleavage system catalyzes the degradation of glycine. The P protein binds the alpha-amino group of glycine through its pyridoxal phosphate cofactor; CO(2) is released and the remaining methylamine moiety is then transferred to the lipoamide cofactor of the H protein. The sequence is that of Glycine dehydrogenase (decarboxylating) from Rhizobium leguminosarum bv. trifolii (strain WSM2304).